Here is a 93-residue protein sequence, read N- to C-terminus: Large ribosomal subunit protein eL43 (93 aa).

A C4-type zinc finger spans residues 39–60 (CEFCGKYGVKRKAVGIWGCKDC).

The protein belongs to the eukaryotic ribosomal protein eL43 family.

This is Large ribosomal subunit protein eL43 (RPL37A) from Brassica rapa subsp. rapa (Turnip).